Here is a 340-residue protein sequence, read N- to C-terminus: Ketol-acid reductoisomerase (NADP(+)) (340 aa).

A KARI N-terminal Rossmann domain is found at 1–182; it reads MRVYYDRDCD…GGGRSGIIET (182 aa). Residues 24 to 27, R48, S51, S53, and 83 to 86 contribute to the NADP(+) site; these read YGSQ and DELQ. Residue H108 is part of the active site. G134 provides a ligand contact to NADP(+). The KARI C-terminal knotted domain maps to 183-329; that stretch reads NFRQECETDL…EKLRGMMPWI (147 aa). Mg(2+) contacts are provided by D191, E195, E227, and E231. S252 lines the substrate pocket.

Belongs to the ketol-acid reductoisomerase family. Mg(2+) serves as cofactor.

The catalysed reaction is (2R)-2,3-dihydroxy-3-methylbutanoate + NADP(+) = (2S)-2-acetolactate + NADPH + H(+). It carries out the reaction (2R,3R)-2,3-dihydroxy-3-methylpentanoate + NADP(+) = (S)-2-ethyl-2-hydroxy-3-oxobutanoate + NADPH + H(+). The protein operates within amino-acid biosynthesis; L-isoleucine biosynthesis; L-isoleucine from 2-oxobutanoate: step 2/4. It functions in the pathway amino-acid biosynthesis; L-valine biosynthesis; L-valine from pyruvate: step 2/4. Functionally, involved in the biosynthesis of branched-chain amino acids (BCAA). Catalyzes an alkyl-migration followed by a ketol-acid reduction of (S)-2-acetolactate (S2AL) to yield (R)-2,3-dihydroxy-isovalerate. In the isomerase reaction, S2AL is rearranged via a Mg-dependent methyl migration to produce 3-hydroxy-3-methyl-2-ketobutyrate (HMKB). In the reductase reaction, this 2-ketoacid undergoes a metal-dependent reduction by NADPH to yield (R)-2,3-dihydroxy-isovalerate. This Paracoccus denitrificans (strain Pd 1222) protein is Ketol-acid reductoisomerase (NADP(+)).